Consider the following 802-residue polypeptide: DSC E3 ubiquitin ligase complex subunit A (802 aa).

Residues 1 to 22 (MDNRGSFFFLLIVFYLLLSSQS) form the signal peptide. Over 23–381 (RPPLLDQDRE…TGPKIEEYDK (359 aa)) the chain is Lumenal. Asn-48, Asn-71, Asn-115, Asn-126, Asn-148, and Asn-166 each carry an N-linked (GlcNAc...) asparagine glycan. Residues 382–402 (YSARLVFIICGVFAAQITLLL) form a helical membrane-spanning segment. Over 403–429 (RQIKEASTPSTRSRISFYTIALMAFGD) the chain is Cytoplasmic. A helical membrane pass occupies residues 430–450 (AFVLIFILLELYPAVSFLVMA). Topologically, residues 451-453 (TAA) are lumenal. A helical membrane pass occupies residues 454 to 474 (FLTFLSVSYIGMKFMMEIWAV). Residues 475–550 (QAPERREQER…QETRNDVGAM (76 aa)) are Cytoplasmic-facing. The segment at 478-541 (ERREQERRSN…TNRGTTSAAQ (64 aa)) is disordered. The span at 532-541 (TNRGTTSAAQ) shows a compositional bias: polar residues. A helical transmembrane segment spans residues 551-571 (YARFYFVLFVMLIISIWSFLW). Residues 572 to 574 (PNR) lie on the Lumenal side of the membrane. The helical transmembrane segment at 575 to 595 (LGALYARALAFVYLSFWTPQI) threads the bilayer. The Cytoplasmic portion of the chain corresponds to 596–608 (GRNIIRNCRKALR). The chain crosses the membrane as a helical span at residues 609 to 629 (WDFVIGQSILRLFPFVYFLTV). Topologically, residues 630–642 (RGNVLFIHPDTTT) are lumenal. Residues 643–663 (AFALAGWVWIQVWVLASQDIL) traverse the membrane as a helical segment. The Cytoplasmic portion of the chain corresponds to 664-802 (GPRFFVPRGW…PICRESIPPV (139 aa)). The segment at 732 to 796 (CAICMQEIEV…RLRLQCPICR (65 aa)) adopts an RING-type; atypical zinc-finger fold.

Component of the DSC E3 ubiquitin ligase complex composed of dscA, dscB, dscC and dscD.

It is found in the endoplasmic reticulum membrane. It catalyses the reaction S-ubiquitinyl-[E2 ubiquitin-conjugating enzyme]-L-cysteine + [acceptor protein]-L-lysine = [E2 ubiquitin-conjugating enzyme]-L-cysteine + N(6)-ubiquitinyl-[acceptor protein]-L-lysine.. The protein operates within protein modification; protein ubiquitination. Catalytic component of the DSC E3 ubiquitin ligase complex which is required for the srbA transcriptional activator proteolytic cleavage to release the soluble transcription factor from the membrane in low oxygen or sterol conditions. Required for growth during hypoxia and triazole drug susceptibility, as well as for virulence in a murine model of invasive pulmonary aspergillosis (IPA). This Aspergillus fumigatus (strain CBS 144.89 / FGSC A1163 / CEA10) (Neosartorya fumigata) protein is DSC E3 ubiquitin ligase complex subunit A.